The sequence spans 266 residues: Pre-mRNA-splicing factor PRP11 (266 aa).

Positions 1-21 are disordered; that stretch reads MNYLEGVGSKKGGGGIASESQ. The Matrin-type zinc-finger motif lies at 66 to 96; it reads LVCKLCNTMHMSWSSVERHLGGKKHGLNVLR.

Belongs to the SF3A2 family. Belongs to the CWC complex (or CEF1-associated complex), a spliceosome sub-complex reminiscent of a late-stage spliceosome composed of the U2, U5 and U6 snRNAs and at least BUD13, BUD31, BRR2, CDC40, CEF1, CLF1, CUS1, CWC2, CWC15, CWC21, CWC22, CWC23, CWC24, CWC25, CWC27, ECM2, HSH155, IST3, ISY1, LEA1, MSL1, NTC20, PRP8, PRP9, PRP11, PRP19, PRP21, PRP22, PRP45, PRP46, SLU7, SMB1, SMD1, SMD2, SMD3, SMX2, SMX3, SNT309, SNU114, SPP2, SYF1, SYF2, RSE1 and YJU2. Interacts with CUS2.

It is found in the nucleus. In terms of biological role, mRNA splicing factors, PRP9, PRP11, and PRP21, are necessary for addition of the U2 snRNP to the pre-mRNA in an early step of spliceosome assembly. The protein is Pre-mRNA-splicing factor PRP11 (PRP11) of Saccharomyces cerevisiae (strain ATCC 204508 / S288c) (Baker's yeast).